A 784-amino-acid polypeptide reads, in one-letter code: ent-copalyl diphosphate synthase 2, chloroplastic (784 aa).

The transit peptide at 1-57 (MSMTLFASVTRPGLPGPTALRFPETRHLFHSVTAFAASFSPSKSSVGSSQCNATTPP) directs the protein to the chloroplast. Lysine 242 provides a ligand contact to substrate. Aspartate 379 and aspartate 381 together coordinate Mg(2+). The DXDD motif signature appears at 379 to 382 (DIDD). Residue lysine 466 participates in substrate binding.

It belongs to the terpene synthase family. Requires Mg(2+) as cofactor. Present in both leaves and flowers.

It localises to the plastid. Its subcellular location is the chloroplast. The protein operates within plant hormone biosynthesis; gibberellin biosynthesis. It participates in secondary metabolite biosynthesis; terpenoid biosynthesis. In terms of biological role, involved in the biosynthesis of labdane-type diterpenoid including marrubiin and other labdane-related furanoid diterpenoids with potential applications as anti-diabetics, analgesics or vasorelaxants. May be involved in the conversion of geranylgeranyl diphosphate (GGPP) to ent-copalyl diphosphate (ent-CPP) and 8-hydroxycopalyl diphosphate (LPP, labda-13-en-8-ol diphosphate). The polypeptide is ent-copalyl diphosphate synthase 2, chloroplastic (Marrubium vulgare (White horehound)).